A 224-amino-acid chain; its full sequence is MDSWNMKGSKMVDVNEITKYLPGFNCGACGYKRCDLFAEALLNKDVKLEDCPFLLRERFKENYEKLKEILKIKGKIKKEEKYIGVIDGYEADFLLKPLPNECSCRETLLIMDKKELKVGDYIRYRPLGCPIPHFAKIIDEYHGFYIIHVVGPSHRITGEKIEYKDVGIAIVVAFEGIVEGKVPEVGKTVKFIPKHCMMQKVHSGVVVQVEGKRVYIEGIDLKVF.

The 4Fe-4S domain occupies 9 to 68 (SKMVDVNEITKYLPGFNCGACGYKRCDLFAEALLNKDVKLEDCPFLLRERFKENYEKLKE). Residues cysteine 26, cysteine 29, cysteine 34, and cysteine 51 each contribute to the [4Fe-4S] cluster site.

[4Fe-4S] cluster is required as a cofactor.

This is an uncharacterized protein from Methanocaldococcus jannaschii (strain ATCC 43067 / DSM 2661 / JAL-1 / JCM 10045 / NBRC 100440) (Methanococcus jannaschii).